The chain runs to 172 residues: Trypsin inhibitor 1A (172 aa).

2 disulfides stabilise this stretch: cysteine 40-cysteine 84 and cysteine 133-cysteine 139.

It belongs to the protease inhibitor I3 (leguminous Kunitz-type inhibitor) family.

Its function is as follows. WTI-1B inhibits trypsin stoichiometrically. This is Trypsin inhibitor 1A from Psophocarpus tetragonolobus (Winged bean).